Reading from the N-terminus, the 109-residue chain is RNA-binding protein Hfq (109 aa).

The region spanning 9-68 (DPFLNALRKEKVNVSVYLVNGIKLQGQVEAFDQFCIVLRNTVNQMVYKHAISTIVPAKSV) is the Sm domain. The interval 77–109 (PYHQNSNDEQDENVDDIHSDDLEIQENEGNIHE) is disordered.

Belongs to the Hfq family. In terms of assembly, homohexamer.

RNA chaperone that binds small regulatory RNA (sRNAs) and mRNAs to facilitate mRNA translational regulation in response to envelope stress, environmental stress and changes in metabolite concentrations. Also binds with high specificity to tRNAs. In Francisella tularensis subsp. mediasiatica (strain FSC147), this protein is RNA-binding protein Hfq.